Consider the following 324-residue polypeptide: Serine racemase (324 aa).

3 residues coordinate ATP: Ser-32, Lys-51, and Thr-52. The Proton acceptor role is filled by Lys-56. Lys-56 carries the N6-(pyridoxal phosphate)lysine modification. Thr-78 provides a ligand contact to Ca(2+). The active-site Proton acceptor is the Ser-81. Position 83 (Asn-83) interacts with pyridoxal 5'-phosphate. ATP contacts are provided by Gln-86 and Tyr-118. Residue Asp-175 coordinates Mg(2+). Residues Gly-182, Gly-183, Gly-184, and Gly-185 each contribute to the pyridoxal 5'-phosphate site. Residues Glu-207, Ala-211, and Asp-213 each coordinate Ca(2+). Positions 207, 211, and 213 each coordinate Mg(2+). Mn(2+) contacts are provided by Glu-207, Ala-211, and Asp-213. Lys-277 contacts ATP. A pyridoxal 5'-phosphate-binding site is contributed by Ser-310. Asn-313 serves as a coordination point for ATP.

The protein belongs to the serine/threonine dehydratase family. Homodimer. Mg(2+) serves as cofactor. The cofactor is Mn(2+). It depends on Ca(2+) as a cofactor. Pyridoxal 5'-phosphate is required as a cofactor.

It catalyses the reaction L-serine = D-serine. It carries out the reaction L-serine = pyruvate + NH4(+). The catalysed reaction is D-serine = pyruvate + NH4(+). Catalyzes the synthesis of D-serine from L-serine. Has dehydratase activity towards both L-serine and D-serine. This chain is Serine racemase (srr), found in Dictyostelium discoideum (Social amoeba).